The following is a 315-amino-acid chain: Leucine-rich repeat-containing protein 75B (315 aa).

The segment at 1 to 23 (MGARLGRRAGPEAGSEAGAAAGC) is disordered. A compositionally biased stretch (low complexity) spans 11–23 (PEAGSEAGAAAGC). LRR repeat units follow at residues 182–195 (LAVL…LSDE) and 207–220 (LPRL…GNRL). Positions 284–315 (PEGSAAGATTPASTWDSTAAGLGPEPQACCAR) are disordered. A compositionally biased stretch (low complexity) spans 286 to 297 (GSAAGATTPAST).

It belongs to the LRRC75 family.

May suppress myogenic differentiation by modulating MYOG expression and Erk1/2 signaling. The sequence is that of Leucine-rich repeat-containing protein 75B from Homo sapiens (Human).